A 400-amino-acid chain; its full sequence is Probable protein phosphatase 2C 64 (400 aa).

Residues 47–355 (DFSMAVVQAN…DDITVIVVFF (309 aa)) enclose the PPM-type phosphatase domain. Residue Ser-75 is modified to Phosphoserine. Mn(2+)-binding residues include Asp-86, Gly-87, Asp-287, and Asp-346.

It belongs to the PP2C family. Interacts with SAUR19. Mg(2+) serves as cofactor. It depends on Mn(2+) as a cofactor.

It catalyses the reaction O-phospho-L-seryl-[protein] + H2O = L-seryl-[protein] + phosphate. The enzyme catalyses O-phospho-L-threonyl-[protein] + H2O = L-threonyl-[protein] + phosphate. Dephosphorylates and represses plasma membrane H(+)-ATPases (PM H(+)-ATPases, e.g. AHA1 and AHA2), thus influencing negatively plant growth and fitness. The polypeptide is Probable protein phosphatase 2C 64 (Arabidopsis thaliana (Mouse-ear cress)).